Consider the following 396-residue polypeptide: Elongation factor Tu (396 aa).

The region spanning 10 to 206 is the tr-type G domain; the sequence is KPHVNVGTIG…ALDSYIPTPE (197 aa). The G1 stretch occupies residues 19–26; it reads GHVDHGKT. 19 to 26 lines the GTP pocket; sequence GHVDHGKT. T26 serves as a coordination point for Mg(2+). Residues 60-64 are G2; that stretch reads GITIN. The interval 81 to 84 is G3; the sequence is DCPG. GTP-binding positions include 81–85 and 136–139; these read DCPGH and NKCD. The G4 stretch occupies residues 136–139; that stretch reads NKCD. A G5 region spans residues 174 to 176; the sequence is SAK.

Belongs to the TRAFAC class translation factor GTPase superfamily. Classic translation factor GTPase family. EF-Tu/EF-1A subfamily. Monomer.

It localises to the cytoplasm. The catalysed reaction is GTP + H2O = GDP + phosphate + H(+). Its function is as follows. GTP hydrolase that promotes the GTP-dependent binding of aminoacyl-tRNA to the A-site of ribosomes during protein biosynthesis. The protein is Elongation factor Tu of Herminiimonas arsenicoxydans.